We begin with the raw amino-acid sequence, 236 residues long: 2,3,4,5-tetrahydropyridine-2,6-dicarboxylate N-acetyltransferase (236 aa).

Belongs to the transferase hexapeptide repeat family. DapH subfamily.

The catalysed reaction is (S)-2,3,4,5-tetrahydrodipicolinate + acetyl-CoA + H2O = L-2-acetamido-6-oxoheptanedioate + CoA. Its pathway is amino-acid biosynthesis; L-lysine biosynthesis via DAP pathway; LL-2,6-diaminopimelate from (S)-tetrahydrodipicolinate (acetylase route): step 1/3. Catalyzes the transfer of an acetyl group from acetyl-CoA to tetrahydrodipicolinate. The chain is 2,3,4,5-tetrahydropyridine-2,6-dicarboxylate N-acetyltransferase from Brevibacillus brevis (strain 47 / JCM 6285 / NBRC 100599).